A 522-amino-acid polypeptide reads, in one-letter code: MSKGEDKFSSVLKLTEFDYIVPSQICIKPVEIEKSNDSGNSKIQIESDGRYVEISEDGTKKSLEKATITLNDCLACSGCITSAESVLITAQSISEFLLNVNNNNDSNNNQDEKKTIVITLSPQSRASLASHFKISTLSVVKKLKTFFKKLNINYLFDSSFSRDFSLLESAAEFVARYKKTYINNNNDEETGKLEPFPLPMLSSACPGWICYAEKTHGEFILPFISTTKSPQQIMGTLVKYYFTEKILDNNTNNNNNNNNNNNNNNSKIKPSNIYHVTIMPCYDKKLEASRNDFYNDIFKTKDVDCVLSTTEILDLFKEKEIDFLSLEEDNSIEEQFFQLSPSNQFYSINGSSGGYLEFIYKYAAKELFNVDIVEPIQYKIGRNQDFKEVSLEIDGKKVLNFAQAYGFRNIQNIVRKIKTNITTKKDTNSQYDFVEIMACPSGCINGGGQIKSDAIKENKAILLDSEEKYNENVIFRQPIDNQSVQNIYNTWLNGCFSTDSKTNLHTQYHRIEKTTNALNIKW.

Residues cysteine 26, cysteine 73, cysteine 76, cysteine 79, cysteine 205, cysteine 281, cysteine 439, and cysteine 443 each contribute to the [4Fe-4S] cluster site.

Belongs to the NARF family.

Component of the cytosolic iron-sulfur (Fe/S) protein assembly machinery. Required for maturation of extramitochondrial Fe/S proteins. This chain is Probable cytosolic Fe-S cluster assembly factor narfl (narfl), found in Dictyostelium discoideum (Social amoeba).